The sequence spans 397 residues: Dual specificity mitogen-activated protein kinase kinase 2 (397 aa).

Positions 1-21 (MAPKRRPVPLIIAPTGEGQST) are disordered. Positions 69 to 366 (FDPICELGAG…LKMLMGHTFI (298 aa)) constitute a Protein kinase domain. ATP-binding positions include 75 to 83 (LGAGNGGVV) and Lys-98. Catalysis depends on Asp-191, which acts as the Proton acceptor. Ser-219 and Ser-223 each carry phosphoserine; by RAF. The tract at residues 284–306 (GGAEGHSMSPRQRPPGRPVSGHG) is disordered.

It belongs to the protein kinase superfamily. STE Ser/Thr protein kinase family. MAP kinase kinase subfamily. Phosphorylation on Ser/Thr by MAP kinase kinase kinases (RAF) positively regulates the kinase activity.

The enzyme catalyses L-seryl-[protein] + ATP = O-phospho-L-seryl-[protein] + ADP + H(+). The catalysed reaction is L-threonyl-[protein] + ATP = O-phospho-L-threonyl-[protein] + ADP + H(+). It catalyses the reaction L-tyrosyl-[protein] + ATP = O-phospho-L-tyrosyl-[protein] + ADP + H(+). Functionally, catalyzes the concomitant phosphorylation of a threonine and a tyrosine residue in a Thr-Glu-Tyr sequence located in MAP kinases. This chain is Dual specificity mitogen-activated protein kinase kinase 2 (map2k2), found in Cyprinus carpio (Common carp).